The sequence spans 504 residues: Peroxisomal N(1)-acetyl-spermine/spermidine oxidase (504 aa).

FAD-binding positions include Ala-16, Glu-37, Arg-45, and 61–62 (HW). His-64 and Val-187 together coordinate substrate. Val-240 is a binding site for FAD. Asn-313 contacts substrate. Residues Glu-465 and 474-475 (TT) each bind FAD. Residues 502–504 (PRL) carry the Microbody targeting signal motif.

The protein belongs to the flavin monoamine oxidase family. In terms of assembly, monomer. Requires FAD as cofactor. As to expression, widely expressed at different developmental stages. Expressed at high level in the liver and the stomach, expressed at lower level in heart, spleen, thymus, small intestine, muscle, pancreas, uterus, and breast and expressed at very low level in brain, kidney, lung, testis, skin, adrenal gland and prostate gland.

The protein localises to the peroxisome. It localises to the cytoplasm. The enzyme catalyses N(1)-acetylspermine + O2 + H2O = 3-acetamidopropanal + spermidine + H2O2. It catalyses the reaction N(1)-acetylspermidine + O2 + H2O = 3-acetamidopropanal + putrescine + H2O2. It carries out the reaction N(1),N(12)-diacetylspermine + O2 + H2O = 3-acetamidopropanal + N(1)-acetylspermidine + H2O2. It functions in the pathway amine and polyamine metabolism; spermine metabolism. Its function is as follows. Flavoenzyme which catalyzes the oxidation of N(1)-acetylspermine to spermidine and is thus involved in the polyamine back-conversion. Can also oxidize N(1)-acetylspermidine to putrescine. Substrate specificity: N(1)-acetylspermine = N(1)-acetylspermidine &gt; N(1),N(12)-diacylspermine &gt;&gt; spermine. Does not oxidize spermidine. Plays an important role in the regulation of polyamine intracellular concentration and has the potential to act as a determinant of cellular sensitivity to the antitumor polyamine analogs. This is Peroxisomal N(1)-acetyl-spermine/spermidine oxidase (Paox) from Mus musculus (Mouse).